A 457-amino-acid chain; its full sequence is Bifunctional protein GlmU (457 aa).

The segment at 1–230 is pyrophosphorylase; it reads MPLSLPLHIV…AREVEGVNDL (230 aa). UDP-N-acetyl-alpha-D-glucosamine-binding positions include 12-15, lysine 26, glutamine 78, 83-84, 105-107, glycine 140, glutamate 155, asparagine 170, and asparagine 228; these read LAAG, GT, and YGD. A Mg(2+)-binding site is contributed by aspartate 107. Asparagine 228 provides a ligand contact to Mg(2+). Positions 231-251 are linker; that stretch reads WQLTQLERAWQIRAARALCLQ. The tract at residues 252-457 is N-acetyltransferase; sequence GARVADPARL…DSWQRPKKKT (206 aa). Residues arginine 334 and lysine 352 each contribute to the UDP-N-acetyl-alpha-D-glucosamine site. Histidine 364 (proton acceptor) is an active-site residue. Positions 367 and 378 each coordinate UDP-N-acetyl-alpha-D-glucosamine. Acetyl-CoA contacts are provided by residues alanine 381, 387 to 388, serine 406, alanine 424, and arginine 441; that span reads NY.

This sequence in the N-terminal section; belongs to the N-acetylglucosamine-1-phosphate uridyltransferase family. It in the C-terminal section; belongs to the transferase hexapeptide repeat family. Homotrimer. The cofactor is Mg(2+).

The protein resides in the cytoplasm. The catalysed reaction is alpha-D-glucosamine 1-phosphate + acetyl-CoA = N-acetyl-alpha-D-glucosamine 1-phosphate + CoA + H(+). The enzyme catalyses N-acetyl-alpha-D-glucosamine 1-phosphate + UTP + H(+) = UDP-N-acetyl-alpha-D-glucosamine + diphosphate. It participates in nucleotide-sugar biosynthesis; UDP-N-acetyl-alpha-D-glucosamine biosynthesis; N-acetyl-alpha-D-glucosamine 1-phosphate from alpha-D-glucosamine 6-phosphate (route II): step 2/2. The protein operates within nucleotide-sugar biosynthesis; UDP-N-acetyl-alpha-D-glucosamine biosynthesis; UDP-N-acetyl-alpha-D-glucosamine from N-acetyl-alpha-D-glucosamine 1-phosphate: step 1/1. Its pathway is bacterial outer membrane biogenesis; LPS lipid A biosynthesis. Its function is as follows. Catalyzes the last two sequential reactions in the de novo biosynthetic pathway for UDP-N-acetylglucosamine (UDP-GlcNAc). The C-terminal domain catalyzes the transfer of acetyl group from acetyl coenzyme A to glucosamine-1-phosphate (GlcN-1-P) to produce N-acetylglucosamine-1-phosphate (GlcNAc-1-P), which is converted into UDP-GlcNAc by the transfer of uridine 5-monophosphate (from uridine 5-triphosphate), a reaction catalyzed by the N-terminal domain. This is Bifunctional protein GlmU from Xylella fastidiosa (strain 9a5c).